Reading from the N-terminus, the 636-residue chain is Transcription termination factor FttA (636 aa).

The tract at residues Ser3–Leu70 is KHa. A KHb region spans residues Met71–Pro138. The interval Trp179 to His383 is metallo-beta-lactamase N-terminus. Zn(2+) contacts are provided by His242, His244, Asp246, His247, His329, and Asp352. The interval Glu384–Ser577 is beta-Casp. The segment at Gly578–Gln636 is metallo-beta-lactamase C-terminus. His603 is a Zn(2+) binding site.

It belongs to the metallo-beta-lactamase superfamily. RNA-metabolizing metallo-beta-lactamase-like family. FttA subfamily. Homodimer. Interacts with RNA polymerase (RNAP), interacts with the Spt4-Spt5 complex. Does not seem to interact with the RNA degrading exosome. Zn(2+) serves as cofactor.

With respect to regulation, most active at 0.5 M or 0.7 M NaCl, less active at 1.0 M NaCl. Nuclease activity is inhibited by N,N,Tetrakis-(2-pyridylmethyl)-ethylene diamine (TPEN), a specific chelator of zinc ions. In terms of biological role, terminates transcription on the whole genome. Termination is linked to FttA-mediated RNA cleavage and does not require NTP hydrolysis. Cleaves endonucleolytically at the RNA exit channel of RNA polymerase (RNAP); the 5'-3' exonuclease activity of this protein degrades the nascent RNA released from RNAP. Its function is as follows. An RNA nuclease, it bind single-stranded RNA (ssRNA) with a preference for U-rich sequences. In Methanothermobacter thermautotrophicus (strain ATCC 29096 / DSM 1053 / JCM 10044 / NBRC 100330 / Delta H) (Methanobacterium thermoautotrophicum), this protein is Transcription termination factor FttA.